The primary structure comprises 195 residues: MILIIDNYDSFSYNLVQSVGEINSDLIVLRSDEIDVSKLQNLNIKHIIISPGPGHPDEYTICKQVVKFFAPYTPILGICLGHQIIATCYNASIKKSSPVFHGRASKIYCLKDKLFLGIHAPFTAARYHSLVVDQDKRGLDLTTCLKTIAITREGVIMACKHRYYHFTYGIQFHPESMLTIQGTKLLKNFLSLSYG.

The 195-residue stretch at 1-195 (MILIIDNYDS…LKNFLSLSYG (195 aa)) folds into the Glutamine amidotransferase type-1 domain. An L-glutamine-binding site is contributed by 52–54 (GPG). The active-site Nucleophile; for GATase activity is the cysteine 79. Residues glutamine 83 and 129 to 130 (SL) each bind L-glutamine. Catalysis depends on residues histidine 173 and glutamate 175.

As to quaternary structure, tetramer of two components I and two components II.

The protein localises to the plastid. The protein resides in the chloroplast. It carries out the reaction chorismate + L-glutamine = anthranilate + pyruvate + L-glutamate + H(+). Its pathway is amino-acid biosynthesis; L-tryptophan biosynthesis; L-tryptophan from chorismate: step 1/5. The chain is Anthranilate synthase component 2 (trpG) from Cyanidium caldarium (Red alga).